Here is a 197-residue protein sequence, read N- to C-terminus: 3-isopropylmalate dehydratase small subunit (197 aa).

The protein belongs to the LeuD family. LeuD type 1 subfamily. Heterodimer of LeuC and LeuD.

It catalyses the reaction (2R,3S)-3-isopropylmalate = (2S)-2-isopropylmalate. The protein operates within amino-acid biosynthesis; L-leucine biosynthesis; L-leucine from 3-methyl-2-oxobutanoate: step 2/4. Its function is as follows. Catalyzes the isomerization between 2-isopropylmalate and 3-isopropylmalate, via the formation of 2-isopropylmaleate. This Streptomyces coelicolor (strain ATCC BAA-471 / A3(2) / M145) protein is 3-isopropylmalate dehydratase small subunit (leuD).